A 448-amino-acid polypeptide reads, in one-letter code: Exoglucanase GH7B (448 aa).

The signal sequence occupies residues 1-17 (MSLAVVFLLGFLAVSHG). Residue Gln-18 is modified to Pyrrolidone carboxylic acid. Intrachain disulfides connect Cys-62–Cys-83 and Cys-73–Cys-79. Substrate-binding positions include Tyr-97, 119–120 (DI), and Lys-197. 6 disulfides stabilise this stretch: Cys-154-Cys-415, Cys-188-Cys-226, Cys-192-Cys-225, Cys-246-Cys-271, Cys-254-Cys-259, and Cys-276-Cys-350. Glu-228 serves as the catalytic Nucleophile. Substrate-binding positions include 230–233 (DIWE) and His-244. The active-site Proton donor/acceptor is Glu-233. Substrate is bound by residues Arg-266 and Asp-274. Residues Trp-396 and Arg-412 each coordinate substrate.

Belongs to the glycosyl hydrolase 7 (cellulase C) family. Monomer. In terms of tissue distribution, highly expressed in the hepatopancreas (at protein level). Little or no expression detected in the hindgut or the rest of the body (at protein level).

The protein resides in the secreted. It catalyses the reaction Hydrolysis of (1-&gt;4)-beta-D-glucosidic linkages in cellulose and cellotetraose, releasing cellobiose from the non-reducing ends of the chains.. Exocellobiohydrolase (CBH) that catalyzes the hydrolysis of 1,4-beta-D-glucosidic bonds in cellulose to release the disaccharide cellobiose. The degradation of cellulose involves an interplay between different cellulolytic enzymes. Hydrolysis starts with endoglucanases (EGs), which cut internal beta-1,4-glucosidic bonds in cellulose to reduce the polymerization degree of the substrate and create new chain ends for exocellobiohydrolases (CBHs). The CBHs release the disaccharide cellobiose from the non-reducing end of the cellulose polymer chain. Finally, beta-1,4-glucosidases hydrolyze the cellobiose and other short cello-oligosaccharides into glucose units. The sequence is that of Exoglucanase GH7B from Limnoria quadripunctata (Gribble).